We begin with the raw amino-acid sequence, 227 residues long: Uridylate kinase (227 aa).

ATP is bound at residue 9–10 (GS). Glycine 44 contacts UMP. ATP contacts are provided by glycine 45 and arginine 49. UMP-binding positions include aspartate 66 and 114–120 (TVPGHTT). 3 residues coordinate ATP: threonine 140, phenylalanine 146, and aspartate 149.

It belongs to the UMP kinase family. In terms of assembly, homohexamer.

Its subcellular location is the cytoplasm. The catalysed reaction is UMP + ATP = UDP + ADP. It participates in pyrimidine metabolism; CTP biosynthesis via de novo pathway; UDP from UMP (UMPK route): step 1/1. With respect to regulation, inhibited by UTP. In terms of biological role, catalyzes the reversible phosphorylation of UMP to UDP. The chain is Uridylate kinase from Natronomonas pharaonis (strain ATCC 35678 / DSM 2160 / CIP 103997 / JCM 8858 / NBRC 14720 / NCIMB 2260 / Gabara) (Halobacterium pharaonis).